A 338-amino-acid polypeptide reads, in one-letter code: 1-aminocyclopropane-1-carboxylate deaminase (338 aa).

N6-(pyridoxal phosphate)lysine is present on Lys51. Catalysis depends on Ser78, which acts as the Nucleophile.

The protein belongs to the ACC deaminase/D-cysteine desulfhydrase family. As to quaternary structure, homotrimer. Pyridoxal 5'-phosphate serves as cofactor.

It catalyses the reaction 1-aminocyclopropane-1-carboxylate + H2O = 2-oxobutanoate + NH4(+). Functionally, catalyzes a cyclopropane ring-opening reaction, the irreversible conversion of 1-aminocyclopropane-1-carboxylate (ACC) to ammonia and alpha-ketobutyrate. Allows growth on ACC as a nitrogen source. In Burkholderia pseudomallei (strain 1710b), this protein is 1-aminocyclopropane-1-carboxylate deaminase.